We begin with the raw amino-acid sequence, 471 residues long: Methyltransferase OMS1, mitochondrial (471 aa).

The N-terminal 39 residues, 1-39 (MIVFRRFPTCLLHHIRQPASRSLLLESQRRSLSFTSYKY), are a transit peptide targeting the mitochondrion. Over 40 to 103 (NSSHIDDDKS…AIARSEKFSK (64 aa)) the chain is Mitochondrial matrix. The chain crosses the membrane as a helical span at residues 104 to 123 (GMTKYMIGAYVIFLIYGLFF). Over 124 to 471 (TKKLFAKDKE…LEPVPPVSKS (348 aa)) the chain is Mitochondrial intermembrane. Basic and acidic residues predominate over residues 450 to 463 (FEKKDDMASKKELE). The interval 450 to 471 (FEKKDDMASKKELEPVPPVSKS) is disordered.

Belongs to the methyltransferase superfamily. METL family.

The protein localises to the mitochondrion inner membrane. Functionally, mitochondrial methyltransferase which suppresses respiratory defects caused by OXA1 mutations when overexpressed. The chain is Methyltransferase OMS1, mitochondrial (OMS1) from Saccharomyces cerevisiae (strain ATCC 204508 / S288c) (Baker's yeast).